The following is a 317-amino-acid chain: Aquaporin-2 (317 aa).

Residues 1-75 (MSLRDDLTIN…RSQEFKMQHR (75 aa)) are Cytoplasmic-facing. The chain crosses the membrane as a helical span at residues 76 to 96 (EFLAEFIGTLILVLLTCGFCA). At 97-108 (EQTLNIEKSKSW) the chain is on the extracellular side. A helical membrane pass occupies residues 109-129 (LTSSLGSGLSVLIGICVAGHV). Topologically, residues 130-154 (SGGHLNPAITIAFWVFSGFPIRKVP) are cytoplasmic. The NPA 1 signature appears at 135 to 137 (NPA). Residues 155–175 (MYITAQLLGAFSGAALLYSIV) form a helical membrane-spanning segment. Over 176-208 (EPAISQFDHGKRQILGELGTAGIFGTYPPLYVG) the chain is Extracellular. The chain crosses the membrane as a helical span at residues 209-229 (TGSAVASEVVGTAMLLLVVMV). The Cytoplasmic portion of the chain corresponds to 230 to 242 (TGHPNNLPFRTAQ). The chain crosses the membrane as a helical span at residues 243-263 (GAMIALGVTTISLCIGYTSGF). Over 264–295 (SLNPARDFGPRLFTAVAGWGIDVFTVHHYYAL) the chain is Extracellular. Residues 266–268 (NPA) carry the NPA 2 motif. A helical membrane pass occupies residues 296–316 (VPMFAPILGGLAGGFIYTVFI). Aspartate 317 is a topological domain (cytoplasmic).

The protein belongs to the MIP/aquaporin (TC 1.A.8) family.

The protein resides in the cell membrane. The enzyme catalyses H2O(in) = H2O(out). It catalyses the reaction glycerol(in) = glycerol(out). In terms of biological role, water channel required to facilitate the transport of water across membranes. Contributes to water uptake of spores during the early stages of spore germination. Aquaporins AQP1 and AQP2 act as extracellular pH sensors and enable the spores to hydrate under favorable conditions and to commence germination. Wounded vegetables and fruit present acidic pH, so the optimal pH range for germination is adapted to the relevant host pH. The protein is Aquaporin-2 of Rhizopus delemar (strain RA 99-880 / ATCC MYA-4621 / FGSC 9543 / NRRL 43880) (Mucormycosis agent).